The following is a 262-amino-acid chain: uncharacterized protein (262 aa).

A coiled-coil region spans residues 41–118 (ELQKNEKIDK…EEKAEDFINK (78 aa)).

This is an uncharacterized protein from Plasmodium falciparum (isolate 3D7).